We begin with the raw amino-acid sequence, 155 residues long: Small ribosomal subunit protein uS7cz/uS7cy (155 aa).

This sequence belongs to the universal ribosomal protein uS7 family. Part of the 30S ribosomal subunit.

The protein localises to the plastid. Its subcellular location is the chloroplast. In terms of biological role, one of the primary rRNA binding proteins, it binds directly to 16S rRNA where it nucleates assembly of the head domain of the 30S subunit. This Ipomoea purpurea (Common morning glory) protein is Small ribosomal subunit protein uS7cz/uS7cy (rps7-A).